A 213-amino-acid polypeptide reads, in one-letter code: Phycocyanobilin lyase subunit beta (213 aa).

This sequence belongs to the CpcE/RpcE/PecE family. In terms of assembly, cpcE and CpcF associate to form a lyase.

Its function is as follows. Required for the chromophorylation of the CpcA gene product. This chain is Phycocyanobilin lyase subunit beta (cpcF), found in Thermosynechococcus vestitus (strain NIES-2133 / IAM M-273 / BP-1).